Here is a 669-residue protein sequence, read N- to C-terminus: PDF receptor (669 aa).

Residues 1-244 (MTLLSNILDC…DIARRTRTLE (244 aa)) are Extracellular-facing. Residues 24 to 52 (RQSGSSGPSPSAPTAGTFESKSMLEPTSS) form a disordered region. Residues 26 to 40 (SGSSGPSPSAPTAGT) show a composition bias toward low complexity. N-linked (GlcNAc...) asparagine glycans are attached at residues asparagine 111, asparagine 117, asparagine 130, asparagine 137, asparagine 148, and asparagine 198. A helical transmembrane segment spans residues 245–265 (IVGLCLSLFALIVSLLIFCTF). Residues 266–274 (RSLRNNRTK) lie on the Cytoplasmic side of the membrane. Residues 275–295 (IHKNLFVAMVLQVIIRLTLYL) form a helical membrane-spanning segment. Over 296 to 334 (DQFRRGNKEAATNTSLSVIENTPYLCEASYVLLEYARTA) the chain is Extracellular. An N-linked (GlcNAc...) asparagine glycan is attached at asparagine 308. A helical transmembrane segment spans residues 335 to 355 (MFMWMFIEGLYLHNMVTVAVF). Over 356 to 366 (QGSFPLKFFSR) the chain is Cytoplasmic. A helical transmembrane segment spans residues 367 to 387 (LGWCVPILMTTVWARCTVMYM). Residues 388 to 411 (DTSLGECLWNYNLTPYYWILEGPR) lie on the Extracellular side of the membrane. A helical membrane pass occupies residues 412–432 (LAVILLNFCFLVNIIRVLVMK). Over 433-449 (LRQSQASDIEQTRKAVR) the chain is Cytoplasmic. The chain crosses the membrane as a helical span at residues 450–470 (AAIVLLPLLGITNLLHQLAPL). The Extracellular portion of the chain corresponds to 471–480 (KTATNFAVWS). A helical membrane pass occupies residues 481-501 (YGTHFLTSFQGFFIALIYCFL). The Cytoplasmic segment spans residues 502–669 (NGEVRAVLLK…ESVVFELSEQ (168 aa)). Disordered regions lie at residues 536–573 (AYNTAPDTDAVQPAGDPSATGKRISPPNKRLNGRKPSS) and 590–614 (PRLQNKAREKGKDRVEKTDAEAEPD). Residues 595–609 (KAREKGKDRVEKTDA) are compositionally biased toward basic and acidic residues.

Belongs to the G-protein coupled receptor 2 family. In terms of tissue distribution, mainly present in clock neurons of the brain. Localizes in all 4 s-LNv neurons, 1 LNd neuron, 7 DN1 neurons, and 1 DN3 neuron. In addition to the clock neurons, it is also present in approximately 13 pairs of neurons along the ventral nerve cord in third instar larvae, which do not overlap with dopaminergic or serotonergic neurons. Not present in DN2 neurons (at protein level).

Its subcellular location is the cell membrane. Functionally, receptor for PDF, a neuropeptide controlling circadian behavioral rhythms. Probably regulates circadian behavioral rhythms through coordination of activities of clock neurons. PDF-binding results in the elevation of cAMP synthesis. Plays a role in sleep regulation and regulates the state transition from sleep to wake. This is PDF receptor from Drosophila melanogaster (Fruit fly).